Here is a 271-residue protein sequence, read N- to C-terminus: Neurexophilin-1 (271 aa).

Residues Met1–Cys21 form the signal peptide. Residues Ala22–Leu97 are II. N-linked (GlcNAc...) asparagine glycans are attached at residues Asn23, Asn68, Asn93, Asn146, Asn156, and Asn162. An III region spans residues Gln98–Phe176. Positions Asp177–Asp185 are IV (linker domain). Residues Ala186–Gly271 form a v (Cys-rich) region.

This sequence belongs to the neurexophilin family. Post-translationally, may be proteolytically processed at the boundary between the N-terminal non-conserved and the central conserved domain in neuron-like cells. Brain, only in a scattered subpopulation of neurons that probably represent inhibitory interneurons.

The protein localises to the secreted. In terms of biological role, may be signaling molecules that resemble neuropeptides. Ligand for alpha-neurexins. In Mus musculus (Mouse), this protein is Neurexophilin-1 (Nxph1).